Reading from the N-terminus, the 249-residue chain is Putative NAD(+)--arginine ADP-ribosyltransferase Vis (249 aa).

Residues 1 to 18 (MNTRFLLLLCCLSFTTFS) form the signal peptide. Residues 31 to 223 (EEEVTQLAED…IGVETVKASA (193 aa)) enclose the TR mART core domain. NAD(+)-binding positions include 68–80 (SISGYQTANDYLR), 117–120 (RGTW), and glutamate 137. The active site involves arginine 117. Active-site residues include serine 142 and glutamate 191. Glutamate 191 lines the NAD(+) pocket.

Belongs to the Arg-specific ADP-ribosyltransferase family.

Its subcellular location is the secreted. It carries out the reaction L-arginyl-[protein] + NAD(+) = N(omega)-(ADP-D-ribosyl)-L-arginyl-[protein] + nicotinamide + H(+). A probable mono(ADP-ribosyl)transferase, it may ADP-ribosylate Arg in target protein(s). Upon expression in yeast cells causes cell death. This is Putative NAD(+)--arginine ADP-ribosyltransferase Vis from Vibrio splendidus (strain 12B01).